The chain runs to 519 residues: 2-isopropylmalate synthase (519 aa).

A Pyruvate carboxyltransferase domain is found at 5–267 (VIIFDTTLRD…TTNVNPMEIS (263 aa)). 4 residues coordinate Mn(2+): aspartate 14, histidine 202, histidine 204, and asparagine 238. Positions 392 to 519 (RLESINVQSG…KEQLIHIDQV (128 aa)) are regulatory domain.

Belongs to the alpha-IPM synthase/homocitrate synthase family. LeuA type 1 subfamily. Homodimer. Mn(2+) serves as cofactor.

Its subcellular location is the cytoplasm. The catalysed reaction is 3-methyl-2-oxobutanoate + acetyl-CoA + H2O = (2S)-2-isopropylmalate + CoA + H(+). The protein operates within amino-acid biosynthesis; L-leucine biosynthesis; L-leucine from 3-methyl-2-oxobutanoate: step 1/4. In terms of biological role, catalyzes the condensation of the acetyl group of acetyl-CoA with 3-methyl-2-oxobutanoate (2-ketoisovalerate) to form 3-carboxy-3-hydroxy-4-methylpentanoate (2-isopropylmalate). The sequence is that of 2-isopropylmalate synthase from Psychromonas ingrahamii (strain DSM 17664 / CCUG 51855 / 37).